The primary structure comprises 218 residues: Ras-related protein Rab11E (218 aa).

20–27 is a binding site for GTP; that stretch reads GDSGVGKS. The Effector region signature appears at 42-50; sequence SKSTIGVEF. Residues 68–72 and 126–129 contribute to the GTP site; these read DTAGQ and NKSD. S-geranylgeranyl cysteine attachment occurs at residues Cys-215 and Cys-216.

The protein belongs to the small GTPase superfamily. Rab family.

The protein resides in the cell membrane. This is Ras-related protein Rab11E (RAB11E) from Lotus japonicus (Lotus corniculatus var. japonicus).